A 334-amino-acid chain; its full sequence is Non-functional pseudokinase ZED1 (334 aa).

A Protein kinase domain is found at 49-334 (FSESRIISSW…KELKLIEKLS (286 aa)). Residues 55 to 63 (ISSWGYFIW) and Lys76 each bind ATP. An O-acetylthreonine mark is found at Thr125 and Thr177.

Belongs to the protein kinase superfamily. Ser/Thr protein kinase family. ZRK subfamily. As to quaternary structure, interacts with RPP13L4/ZAR1. Component of an immune signaling complex made of, at least, SZE1, BKN2/SZE2, ZAR1 and ZED1. Binds directly to SZE1 at the plasma membrane. Expressed in seedlings, young leaves, floral organs, shoot apical meristems (SAM) and inflorescence stems.

The protein resides in the cytoplasm. It is found in the cytosol. It localises to the nucleus. Its subcellular location is the cell membrane. Functionally, together with RPP13L4/ZAR1, involved in the ambient temperature (above 22 degrees Celsius)-sensitive aerial organ development. Together with RPP13L4/ZAR1, involved in the regulation of the ambient temperature-sensitive intersection of growth and immune response in the absence of pathogens, by repressing the transcription of SNC1. Probable non-functional kinase required for recognition of the Pseudomonas syringae type III effector HopZ1a by RPP13L4/ZAR1 and, together with SZE1 and SZE2, to trigger subsequent defense responses. May function as a decoy to trap HopZ1a in the ZAR1 complex for recognition by the plant immune system. This Arabidopsis thaliana (Mouse-ear cress) protein is Non-functional pseudokinase ZED1.